A 160-amino-acid chain; its full sequence is Urease accessory protein UreE (160 aa).

The protein belongs to the UreE family.

Its subcellular location is the cytoplasm. Involved in urease metallocenter assembly. Binds nickel. Probably functions as a nickel donor during metallocenter assembly. The polypeptide is Urease accessory protein UreE (Acinetobacter baumannii (strain AB307-0294)).